A 378-amino-acid polypeptide reads, in one-letter code: Ferrochelatase (378 aa).

Residues histidine 214 and glutamate 295 each contribute to the Fe cation site.

It belongs to the ferrochelatase family.

The protein resides in the cytoplasm. It carries out the reaction heme b + 2 H(+) = protoporphyrin IX + Fe(2+). Its pathway is porphyrin-containing compound metabolism; protoheme biosynthesis; protoheme from protoporphyrin-IX: step 1/1. Functionally, catalyzes the ferrous insertion into protoporphyrin IX. In Hydrogenovibrio crunogenus (strain DSM 25203 / XCL-2) (Thiomicrospira crunogena), this protein is Ferrochelatase.